We begin with the raw amino-acid sequence, 285 residues long: MTATLIDGNALSKTLRAQAAERAAALAARGHRPGLAVILVGDNPASEVYVRNKIKACEDNGFFSLKDRYPATLSEPELLARIDELNRDPKIHGILVQLPLPAHIDSHKVIEAIAPEKDVDGFHVANAGALLTGKPLFRPCTPYGVMKMFEAYKIPLQGANAVVIGRSNIVGKPMALLLLEAGATVTICHSKTCELAAHTRAADIVVAAVGKRNVLTADMVKPGATVIDVGMNRNDEGKLCGDVDFAGVSQVAGHITPVPGGVGPMTITMLLVNTIEAAERAAAAA.

Residues 165–167 and S190 each bind NADP(+); that span reads GRS.

It belongs to the tetrahydrofolate dehydrogenase/cyclohydrolase family. In terms of assembly, homodimer.

The enzyme catalyses (6R)-5,10-methylene-5,6,7,8-tetrahydrofolate + NADP(+) = (6R)-5,10-methenyltetrahydrofolate + NADPH. It carries out the reaction (6R)-5,10-methenyltetrahydrofolate + H2O = (6R)-10-formyltetrahydrofolate + H(+). It functions in the pathway one-carbon metabolism; tetrahydrofolate interconversion. Functionally, catalyzes the oxidation of 5,10-methylenetetrahydrofolate to 5,10-methenyltetrahydrofolate and then the hydrolysis of 5,10-methenyltetrahydrofolate to 10-formyltetrahydrofolate. This is Bifunctional protein FolD from Burkholderia mallei (strain NCTC 10247).